Consider the following 296-residue polypeptide: tRNA (guanine-N(7)-)-methyltransferase (296 aa).

The disordered stretch occupies residues 1 to 26 (MSKRTREESEMEAGPSTASPGVSVSP). S-adenosyl-L-methionine contacts are provided by residues Gly101, 124–125 (EI), 168–169 (NS), and Leu188. Asp191 is an active-site residue. 266-268 (TEE) is an S-adenosyl-L-methionine binding site.

Belongs to the class I-like SAM-binding methyltransferase superfamily. TrmB family. As to quaternary structure, forms a complex with TRM82.

The protein resides in the nucleus. The catalysed reaction is guanosine(46) in tRNA + S-adenosyl-L-methionine = N(7)-methylguanosine(46) in tRNA + S-adenosyl-L-homocysteine. It participates in tRNA modification; N(7)-methylguanine-tRNA biosynthesis. Functionally, catalyzes the formation of N(7)-methylguanine at position 46 (m7G46) in tRNA. The polypeptide is tRNA (guanine-N(7)-)-methyltransferase (Cryptococcus neoformans var. neoformans serotype D (strain JEC21 / ATCC MYA-565) (Filobasidiella neoformans)).